Consider the following 291-residue polypeptide: Phosphatidylcholine-sterol acyltransferase (291 aa).

N-linked (GlcNAc...) asparagine glycosylation occurs at Asn-28. The Nucleophile role is filled by Ser-125. Asn-179 is a glycosylation site (N-linked (GlcNAc...) asparagine). A disulfide bridge connects residues Cys-220 and Cys-263. The Charge relay system role is filled by Asp-252. An N-linked (GlcNAc...) asparagine glycan is attached at Asn-280.

It belongs to the AB hydrolase superfamily. Lipase family.

The protein localises to the secreted. The catalysed reaction is a sterol + a 1,2-diacyl-sn-glycero-3-phosphocholine = a sterol ester + a 1-acyl-sn-glycero-3-phosphocholine. Its activity is regulated as follows. APOA1 is the most potent activator in plasma. Also activated by APOE, APOC1 and APOA4. Functionally, central enzyme in the extracellular metabolism of plasma lipoproteins. Synthesized mainly in the liver and secreted into plasma where it converts cholesterol and phosphatidylcholines (lecithins) to cholesteryl esters and lysophosphatidylcholines on the surface of high and low density lipoproteins (HDLs and LDLs). The cholesterol ester is then transported back to the liver. Has a preference for plasma 16:0-18:2 or 18:O-18:2 phosphatidylcholines. Also produced in the brain by primary astrocytes, and esterifies free cholesterol on nascent APOE-containing lipoproteins secreted from glia and influences cerebral spinal fluid (CSF) APOE- and APOA1 levels. Together with APOE and the cholesterol transporter ABCA1, plays a key role in the maturation of glial-derived, nascent lipoproteins. Required for remodeling high-density lipoprotein particles into their spherical forms. This Myodes glareolus (Bank vole) protein is Phosphatidylcholine-sterol acyltransferase (LCAT).